The primary structure comprises 84 residues: Chymotrypsin inhibitor Ani s 6 (84 aa).

Positions methionine 1–lysine 22 are cleaved as a signal peptide. 5 disulfides stabilise this stretch: cysteine 25–cysteine 58, cysteine 34–cysteine 54, cysteine 38–cysteine 50, cysteine 42–cysteine 79, and cysteine 60–cysteine 73. The TIL domain occupies cysteine 25–cysteine 79.

It belongs to the serine protease inhibitor-like (TIL domain-containing) family.

Its subcellular location is the secreted. Functionally, inhibits alpha-chymotrypsin, but not trypsin. The chain is Chymotrypsin inhibitor Ani s 6 from Anisakis simplex (Herring worm).